The following is an 87-amino-acid chain: MERTEKKSIIDTFKTHENDTGSPEVQIALLTDRINHLNDHLKTHKKDHHSRRGLLKMVGQRRNLLNYLKDNQIERYREVIARLGLRK.

It belongs to the universal ribosomal protein uS15 family. In terms of assembly, part of the 30S ribosomal subunit. Forms a bridge to the 50S subunit in the 70S ribosome, contacting the 23S rRNA.

Its function is as follows. One of the primary rRNA binding proteins, it binds directly to 16S rRNA where it helps nucleate assembly of the platform of the 30S subunit by binding and bridging several RNA helices of the 16S rRNA. Functionally, forms an intersubunit bridge (bridge B4) with the 23S rRNA of the 50S subunit in the ribosome. This Alkaliphilus metalliredigens (strain QYMF) protein is Small ribosomal subunit protein uS15.